Here is a 304-residue protein sequence, read N- to C-terminus: Thyroxine 5-deiodinase (304 aa).

The interval 1 to 22 (MPRQAASRLVVGEGEGPPGASG) is disordered. Over 1-42 (MPRQAASRLVVGEGEGPPGASGPAATMLRSLLLHSLRLCAQT) the chain is Cytoplasmic. Residues 43–62 (ASCLVLFPRFLGTAFMLWLL) form a helical; Signal-anchor for type II membrane protein membrane-spanning segment. At 63 to 304 (DFLCIRKHFL…QLHGTRPRRL (242 aa)) the chain is on the extracellular side. Residue Sec-170 is part of the active site. A non-standard amino acid (selenocysteine) is located at residue Sec-170.

Belongs to the iodothyronine deiodinase family. Monomer. Homodimer. May undergo minor heretodimerization with DIO1 and DIO2. As to expression, neonatal skin, placenta, skeletal muscle and cerebral cortex.

The protein resides in the cell membrane. It localises to the endosome membrane. The enzyme catalyses 3,3',5'-triiodo-L-thyronine + iodide + A + H(+) = L-thyroxine + AH2. It carries out the reaction 3,3'-diiodo-L-thyronine + iodide + A + H(+) = 3,3',5-triiodo-L-thyronine + AH2. The catalysed reaction is 3-iodo-L-thyronine + iodide + A + H(+) = 3,5-diiodo-L-thyronine + AH2. It catalyses the reaction L-thyronine + iodide + A + H(+) = 3-iodo-L-thyronine + AH2. The enzyme catalyses 3',5'-diiodo-L-thyronine + iodide + A + H(+) = 3,3',5'-triiodo-L-thyronine + AH2. It carries out the reaction 3'-iodo-L-thyronine + iodide + A + H(+) = 3,3'-diiodo-L-thyronine + AH2. The catalysed reaction is 3,3',5'-triiodothyronamine + iodide + A + H(+) = 3,3',5,5'-tetraiodothyronamine + AH2. It catalyses the reaction 3',5'-diiodothyronamine + iodide + A + H(+) = 3,3',5'-triiodothyronamine + AH2. The enzyme catalyses 3,3'-diiodothyronamine + iodide + A + H(+) = 3,3',5-triiodothyronamine + AH2. It carries out the reaction 3-iodothyronamine + iodide + A + H(+) = 3,5-diiodothyronamine + AH2. The catalysed reaction is 3'-iodothyronamine + iodide + A + H(+) = 3,3'-diiodothyronamine + AH2. It catalyses the reaction thyronamine + iodide + A + H(+) = 3-iodothyronamine + AH2. In terms of biological role, plays a crucial role in the metabolism of thyroid hormones (TH) and has specific roles in TH activation and inactivation by deiodination. Catalyzes the deiodination of L-thyroxine (T4) to 3,3',5'-triiodothyronine (rT3), 3,5-diiodothyronine (3,5-T2) to 3-monoiodothyronine (3-T1), rT3 to 3',5'-diiodothyronine (3',5'-T2) and 3,3'-diiodothyronine (3,3'-T2) to 3'-monoiodothyronine (3'-T1) via inner-ring deiodination (IRD). Catalyzes the deiodination of 3,5,3'-triiodothyronine (T3) to 3,3'-diiodothyronine (3,3'-T2) via IRD. Catalyzes the deiodination of 3-T1 to L-thyronine (T0) via outer-ring deiodination (ORD). Catalyzes the tyrosyl ring deiodinations of T4AM (3,3',5,5'-tetraiodothyronamine), rT3AM (3,3',5'-triiodothyronamine), T3AM (3,5,3'-triiodothyronamine), 3,5-T2AM (3,5-diiodothyronamine), 3,3'-T2AM (3,3'-diiodothyronamine) and 3-T1AM (3-iodothyronamine). This chain is Thyroxine 5-deiodinase (Dio3), found in Rattus norvegicus (Rat).